A 152-amino-acid chain; its full sequence is Natriuretic peptides A (152 aa).

The N-terminal stretch at 1–24 (MGSSAITTSFLLFVAFQLPGQTGA) is a signal peptide. 2 propeptides span residues 25–122 (NPVY…TAPR) and 92–102 (EMGAPSDGDPG). Residues 50–108 (MPLEDEAVPSQVLSEQNEEAGAPLSPLSEVPPWDGGRSTQPREMGAPSDGDPGNPPRSV) are disordered. Position 128 is a phosphoserine (Ser128). A disulfide bridge connects residues Cys129 and Cys145. Residues 146 to 150 (NSFRY) are important for degradation of atrial natriuretic peptide by IDE.

The protein belongs to the natriuretic peptide family. In terms of assembly, homodimer; disulfide-linked antiparallel dimer. In terms of processing, the precursor molecule is proteolytically cleaved by CORIN at Arg-122 to produce the atrial natriuretic peptide. Undergoes further proteolytic cleavage by unknown proteases to give rise to long-acting natriuretic peptide, vessel dilator and kaliuretic peptide. Additional processing gives rise to the auriculin and atriopeptin peptides. In the kidneys, alternative processing by an unknown protease results in the peptide urodilatin. Cleavage by MME initiates degradation of the factor and thereby regulates its activity. Degradation by IDE results in reduced activation of NPR1 (in vitro). During IDE degradation, the resulting products can temporarily stimulate NPR2 to produce cGMP, before the fragments are completely degraded and inactivated by IDE (in vitro). Post-translationally, degraded by IDE. In terms of processing, phosphorylation on Ser-128 decreases vasorelaxant activity.

It localises to the secreted. The protein localises to the perikaryon. Its subcellular location is the cell projection. Its function is as follows. Hormone that plays a key role in mediating cardio-renal homeostasis, and is involved in vascular remodeling and regulating energy metabolism. Acts by specifically binding and stimulating NPR1 to produce cGMP, which in turn activates effector proteins, such as PRKG1, that drive various biological responses. Regulates vasodilation, natriuresis, diuresis and aldosterone synthesis and is therefore essential for regulating blood pressure, controlling the extracellular fluid volume and maintaining the fluid-electrolyte balance. Also involved in inhibiting cardiac remodeling and cardiac hypertrophy by inducing cardiomyocyte apoptosis and attenuating the growth of cardiomyocytes and fibroblasts. Plays a role in female pregnancy by promoting trophoblast invasion and spiral artery remodeling in uterus, and thus prevents pregnancy-induced hypertension. In adipose tissue, acts in various cGMP- and PKG-dependent pathways to regulate lipid metabolism and energy homeostasis. This includes up-regulating lipid metabolism and mitochondrial oxygen utilization by activating the AMP-activated protein kinase (AMPK), and increasing energy expenditure by acting via MAPK11 to promote the UCP1-dependent thermogenesis of brown adipose tissue. Binds the clearance receptor NPR3 which removes the hormone from circulation. Functionally, may have a role in cardio-renal homeostasis through regulation of natriuresis, diuresis, vasodilation, and inhibiting aldosterone synthesis. In vitro, promotes the production of cGMP and induces vasodilation. May promote natriuresis, at least in part, by enhancing prostaglandin E2 synthesis resulting in the inhibition of renal Na+-K+-ATPase. However reports on the involvement of this peptide in mammal blood volume and blood pressure homeostasis are conflicting; according to a report, in vivo it is not sufficient to activate cGMP and does not inhibit collecting duct transport nor effect diuresis and natriuresis. Appears to bind to specific receptors that are distinct from the receptors bound by atrial natriuretic peptide and vessel dilator. Possibly enhances protein excretion in urine by decreasing proximal tubular protein reabsorption. In terms of biological role, may have a role in cardio-renal homeostasis through regulation of natriuresis, diuresis, and vasodilation. In vitro, promotes the production of cGMP and induces vasodilation. May promote natriuresis, at least in part, by enhancing prostaglandin E2 synthesis resulting in the inhibition of renal Na+-K+-ATPase. However reports on the involvement of this peptide in mammal blood volume and blood pressure homeostasis are conflicting; according to a report it is not sufficient to activate cGMP and does not inhibit collecting duct transport nor effect diuresis and natriuresis. Appears to bind to specific receptors that are distinct from the receptors bound by the atrial natriuretic and long-acting natriuretic peptides. Possibly functions in protein excretion in urine by maintaining the integrity of the proximal tubules and enhancing protein excretion by decreasing proximal tubular protein reabsorption. May have a role in cardio-renal homeostasis through regulation of diuresis and inhibiting aldosterone synthesis. In vitro, promotes the production of cGMP and induces vasodilation. May promote natriuresis, at least in part, by enhancing prostaglandin E2 synthesis resulting in the inhibition of renal Na+-K+-ATPase. May have a role in potassium excretion but not sodium excretion (natriuresis). Possibly enhances protein excretion in urine by decreasing proximal tubular protein reabsorption. Its function is as follows. Hormone produced in the kidneys that appears to be important for maintaining cardio-renal homeostasis. Mediates vasodilation, natriuresis and diuresis primarily in the renal system, in order to maintain the extracellular fluid volume and control the fluid-electrolyte balance. Specifically binds and stimulates cGMP production by renal transmembrane receptors, likely NPR1. Urodilatin not ANP, may be the natriuretic peptide responsible for the regulation of sodium and water homeostasis in the kidney. Functionally, may have a role in cardio-renal homeostasis through regulation of natriuresis and vasodilation. In vivo promotes natriuresis and in vitro, vasodilates renal artery strips. In terms of biological role, may have a role in cardio-renal homeostasis through regulation of regulation of natriuresis and vasodilation. In vivo promotes natriuresis. In vitro, vasodilates intestinal smooth muscle but not smooth muscle strips. May have a role in cardio-renal homeostasis through regulation of natriuresis and vasodilation. In vivo promotes natriuresis. In vitro, selectively vasodilates intestinal and vascular smooth muscle strips. Its function is as follows. May have a role in cardio-renal homeostasis through regulation of natriuresis and vasodilation. In vivo promotes natriuresis. In vitro, selectively vasodilates intestinal smooth muscle but not vascular smooth muscle strips. The sequence is that of Natriuretic peptides A (NPPA) from Ovis aries (Sheep).